A 308-amino-acid polypeptide reads, in one-letter code: Tyrosine recombinase XerC (308 aa).

The Core-binding (CB) domain maps to 20-101 (SKLHTLIDDF…SVKAFSSWAQ (82 aa)). The 181-residue stretch at 122–302 (DLPKILGEQQ…SNKRLLEAFN (181 aa)) folds into the Tyr recombinase domain. Active-site residues include arginine 163, lysine 187, histidine 254, arginine 257, and histidine 280. Catalysis depends on tyrosine 289, which acts as the O-(3'-phospho-DNA)-tyrosine intermediate.

It belongs to the 'phage' integrase family. XerC subfamily. In terms of assembly, forms a cyclic heterotetrameric complex composed of two molecules of XerC and two molecules of XerD.

It localises to the cytoplasm. Functionally, site-specific tyrosine recombinase, which acts by catalyzing the cutting and rejoining of the recombining DNA molecules. The XerC-XerD complex is essential to convert dimers of the bacterial chromosome into monomers to permit their segregation at cell division. It also contributes to the segregational stability of plasmids. The polypeptide is Tyrosine recombinase XerC (Corynebacterium glutamicum (strain ATCC 13032 / DSM 20300 / JCM 1318 / BCRC 11384 / CCUG 27702 / LMG 3730 / NBRC 12168 / NCIMB 10025 / NRRL B-2784 / 534)).